A 236-amino-acid polypeptide reads, in one-letter code: UPF0502 protein Bpro_3844 (236 aa).

Belongs to the UPF0502 family.

This Polaromonas sp. (strain JS666 / ATCC BAA-500) protein is UPF0502 protein Bpro_3844.